We begin with the raw amino-acid sequence, 166 residues long: Large ribosomal subunit protein mL49 (166 aa).

The disordered stretch occupies residues Pro-54–Asp-77.

It belongs to the mitochondrion-specific ribosomal protein mL49 family. As to quaternary structure, component of the mitochondrial ribosome large subunit (39S) which comprises a 16S rRNA and about 50 distinct proteins. Interacts with OXA1L.

The protein localises to the mitochondrion. In Mus musculus (Mouse), this protein is Large ribosomal subunit protein mL49 (Mrpl49).